Reading from the N-terminus, the 24-residue chain is Brevinin-1HSa (24 aa).

Cysteine 18 and cysteine 24 are joined by a disulfide.

As to expression, expressed by the skin glands.

Its subcellular location is the secreted. Functionally, has antibacterial activity against the Gram-positive bacterium S.aureus ATCC 25923 (MIC=3 uM) and the Gram-negative bacterium E.coli ATCC 25726 (MIC=24 uM). The chain is Brevinin-1HSa from Odorrana hosii (Hose's rock frog).